Reading from the N-terminus, the 400-residue chain is NADH-quinone oxidoreductase subunit D (400 aa).

This sequence belongs to the complex I 49 kDa subunit family. NDH-1 is composed of 14 different subunits. Subunits NuoB, C, D, E, F, and G constitute the peripheral sector of the complex.

The protein resides in the cell inner membrane. It catalyses the reaction a quinone + NADH + 5 H(+)(in) = a quinol + NAD(+) + 4 H(+)(out). Functionally, NDH-1 shuttles electrons from NADH, via FMN and iron-sulfur (Fe-S) centers, to quinones in the respiratory chain. The immediate electron acceptor for the enzyme in this species is believed to be menaquinone. Couples the redox reaction to proton translocation (for every two electrons transferred, four hydrogen ions are translocated across the cytoplasmic membrane), and thus conserves the redox energy in a proton gradient. The protein is NADH-quinone oxidoreductase subunit D of Prosthecochloris aestuarii (strain DSM 271 / SK 413).